A 433-amino-acid polypeptide reads, in one-letter code: Protein arginine N-methyltransferase 2 (433 aa).

The disordered stretch occupies residues 1–20 (MATSGDCPRSESQGEEPAEC). 2 interaction with ESR1 regions span residues 1 to 277 (MATS…SALK) and 133 to 275 (KESL…NLSA). In terms of domain architecture, SH3 spans 30-89 (VQPEEFVAIADYAATDETQLSFLRGEKILILRQTTADWWWGERAGCCGYIPANHVGKHVD). Asymmetric dimethylarginine is present on residues Arg-61 and Arg-72. Residues 83–207 (HVGKHVDEYD…DVVLPEKVDV (125 aa)) form an interaction with RB1 region. Positions 99 to 432 (DEEYFGSYGT…KVGEKVFPIW (334 aa)) constitute an SAM-dependent MTase PRMT-type domain. S-adenosyl-L-methionine contacts are provided by His-112, Arg-121, Gly-145, Glu-168, and Glu-197. Catalysis depends on residues Glu-211 and Glu-220.

This sequence belongs to the class I-like SAM-binding methyltransferase superfamily. Protein arginine N-methyltransferase family. As to quaternary structure, self-associates. Interacts with RB1 and E2F1. Interacts with NCOA6 coactivator. Interacts (via SH3 domain) with PRMT8. Interacts with AR. Interacts with NFKBIA. Interacts with ESR1, ESR2, PGR, PPARG, RARA, RXRA and THRB. Interacts with HNRNPUL1. As to expression, widely expressed. Highly expressed in androgen target organs such as heart, prostate, skeletal muscle, ovary and spinal cord.

Its subcellular location is the cytoplasm. It localises to the nucleus. The protein resides in the nucleolus. The catalysed reaction is L-arginyl-[protein] + 2 S-adenosyl-L-methionine = N(omega),N(omega)-dimethyl-L-arginyl-[protein] + 2 S-adenosyl-L-homocysteine + 2 H(+). Arginine methyltransferase that methylates the guanidino nitrogens of arginyl residues in proteins such as STAT3, FBL, histone H4. Acts as a coactivator (with NCOA2) of the androgen receptor (AR)-mediated transactivation. Acts as a coactivator (with estrogen) of estrogen receptor (ER)-mediated transactivation. Enhances PGR, PPARG, RARA-mediated transactivation. May inhibit NF-kappa-B transcription and promote apoptosis. Represses E2F1 transcriptional activity (in a RB1-dependent manner). May be involved in growth regulation. This chain is Protein arginine N-methyltransferase 2 (PRMT2), found in Homo sapiens (Human).